Consider the following 529-residue polypeptide: hal-like protein DDB_G0273787/DDB_G0273081 (529 aa).

The segment at residues 151 to 153 (ASG) is a cross-link (5-imidazolinone (Ala-Gly)). 2,3-didehydroalanine (Ser) is present on Ser-152.

Belongs to the PAL/histidase family. Contains an active site 4-methylidene-imidazol-5-one (MIO), which is formed autocatalytically by cyclization and dehydration of residues Ala-Ser-Gly.

It localises to the cytoplasm. It carries out the reaction L-histidine = trans-urocanate + NH4(+). It participates in amino-acid degradation; L-histidine degradation into L-glutamate; N-formimidoyl-L-glutamate from L-histidine: step 1/3. The protein is hal-like protein DDB_G0273787/DDB_G0273081 of Dictyostelium discoideum (Social amoeba).